We begin with the raw amino-acid sequence, 171 residues long: Apoptosis regulator Bcl-2 homolog (171 aa).

In terms of assembly, interacts with host BECN1; this interaction inhibits host autophagy. Interacts with host BAK1 and BAX.

The protein localises to the host cytoplasm. Plays a role in the protection against apoptosis mediated by cytotoxic cells during the immune response to acute and persistent viral infection. Contributes therefore to latency establishment. Plays also a role in the inhibition of host starvation-induced autophagy which ultimately contributes to the viral chronic infection. The chain is Apoptosis regulator Bcl-2 homolog (vBCL2) from Murid herpesvirus 4 (MuHV-4).